The primary structure comprises 526 residues: pH-sensitive chloride channel 2 (526 aa).

The signal sequence occupies residues 1–18; it reads MDTLGIFVLISYLGLSSA. Topologically, residues 19-300 are extracellular; it reads AGVHLGDLQQ…VLLTREVGYY (282 aa). Asparagine 33, asparagine 42, asparagine 52, asparagine 192, asparagine 231, asparagine 264, asparagine 271, and asparagine 283 each carry an N-linked (GlcNAc...) asparagine glycan. A helical membrane pass occupies residues 301–321; that stretch reads VIDYFLPSIMIVTISWVSFWL. The Cytoplasmic segment spans residues 322 to 327; it reads QADQTP. Residues 328 to 347 form a helical membrane-spanning segment; the sequence is ARTTLGCTTLLSFITLSLSQ. The Extracellular portion of the chain corresponds to 348-360; that stretch reads ENNLMKVSYVTMS. The chain crosses the membrane as a helical span at residues 361–381; that stretch reads EVWFLVCTIFIFGSLVEFAFV. Residues 382–505 lie on the Cytoplasmic side of the membrane; it reads NTIWRRNNDL…VSLWIDRKMR (124 aa). Residues 463–488 form a disordered region; it reads ISLDEQDETSTSESSDSSKEKPAQTF. Residues 506 to 526 traverse the membrane as a helical segment; that stretch reads FVFPLSFIVFNALFWTLVYCL.

The protein belongs to the ligand-gated ion channel (TC 1.A.9) family. As to expression, in third-instar larvae, expressed in the principal cells of the excretory Malpighian tubules (at protein level). Also detected in the enterocytes of the copper cell region and the iron cell region of the larval midgut (at protein level). In the copper cell region expression is confined to the interstitial cells and in the iron cell region it is expressed in the anterior portion (at protein level). Expressed in the Malpighian tubules and the middle midgut of third instar larvae and adults.

The protein resides in the apical cell membrane. It is found in the cell projection. The protein localises to the microvillus membrane. It localises to the late endosome membrane. Its subcellular location is the lysosome membrane. The enzyme catalyses chloride(in) = chloride(out). Its function is as follows. Ligand and pH-gated channel that mediates chloride transport primarily in the mid-gut and thereby functions in larval metabolism and fluid homeostasis. Channel opening is triggered by zinc binding or, to a lesser extent, an increase in extracellular pH. Zinc-dependent activity in the mid-gut is required for modulating Tor-dependent metabolic programs that promote larval feeding and systematic growth. It may therefore act as an intestinal zinc sensor that mediates larval growth and metabolism in response to micronutrient availability. Activates Tor signaling via its activity in maintaining lysosome homeostasis in interstitial cells and/or by its role in activating the release of insulin-like peptides in the brain after feeding, via an unknown mechanism. Functions in lysosome homeostasis by regulating chloride transport into enterocyte lysosomes to sustain V-ATPase function which maintains lysosomal acidification and consequently promotes Tor activation at the lysosome membrane. Also appears to play a role in regulating fluid secretion and osmotic homeostasis in Malpighian tubules in response to the pH of extracellular urine. This function is important for proper urine production during diuresis. The polypeptide is pH-sensitive chloride channel 2 (Drosophila melanogaster (Fruit fly)).